The primary structure comprises 622 residues: MRLLRRRHMSLRLAMLGSVFMLFLFIRQKDVSNQEQAMEKPWLKSLAGQKDQVLDFMLGAVNNIRDVMPKLQIRAPEPPQTLVSTNHSCLPGFYTPAELKPFWDRPPQDPNSPGADGKAFQKKEWTNLETKEKEEGYKKHCFNAFASDRISLQRSLGPDTRPPECVDQKFRRCPPLPTTSVIIVFHNEAWSTLLRTVYSVLHTSPAILLKEIILVDDASTDEHLKERLEQYVQQLQIVRVVRQRERKGLITARLLGASVAQAEVLTFLDAHCECFHGWLEPLLARIAEDKTAVVSPDIVTIDLNTFQFSRPVQRGKAHSRGNFDWSLTFGWEMLPEHEKQRRKDETYPIKSPTFAGGLFSISKAYFEHIGTYDNQMEIWGGENVEMSFRVWQCGGQLEIIPCSVVGHVFRTKSPHTFPKGTSVIARNQVRLAEVWMDDYKKIFYRRNLQAAKMVQENNFGDISERLRLREQLRCHNFSWYLHNVYPEMFVPDLNPTFYGAIKNLGTNQCLDVGENNRGGKPLIMYVCHNLGGNQYFEYTSQRDLRHNIGKQLCLHASGSTLGLRSCQFVGKNSRVPKDEEWELTQDQLIRNSGSGTCLTSQDKKPAMAPCNPRDPYQLWLFV.

At 1 to 8 (MRLLRRRH) the chain is on the cytoplasmic side. A helical; Signal-anchor for type II membrane protein transmembrane segment spans residues 9 to 28 (MSLRLAMLGSVFMLFLFIRQ). Residues 29–622 (KDVSNQEQAM…RDPYQLWLFV (594 aa)) lie on the Lumenal side of the membrane. N-linked (GlcNAc...) asparagine glycosylation is present at Asn86. A catalytic subdomain A region spans residues 176–285 (LPTTSVIIVF…HGWLEPLLAR (110 aa)). Residues Asp269, His271, and His407 each contribute to the Mn(2+) site. The catalytic subdomain B stretch occupies residues 348-410 (PIKSPTFAGG…PCSVVGHVFR (63 aa)). A glycan (N-linked (GlcNAc...) asparagine) is linked at Asn476. The 117-residue stretch at 506–622 (TNQCLDVGEN…RDPYQLWLFV (117 aa)) folds into the Ricin B-type lectin domain. A disulfide bridge links Cys509 with Cys527. The UDP-N-acetyl-alpha-D-galactosamine site is built by Asp511, Glu514, His528, and Asn533. Disulfide bonds link Cys553-Cys566 and Cys597-Cys610.

Belongs to the glycosyltransferase 2 family. GalNAc-T subfamily. It depends on Mn(2+) as a cofactor.

It is found in the golgi apparatus membrane. The enzyme catalyses L-seryl-[protein] + UDP-N-acetyl-alpha-D-galactosamine = a 3-O-[N-acetyl-alpha-D-galactosaminyl]-L-seryl-[protein] + UDP + H(+). It catalyses the reaction L-threonyl-[protein] + UDP-N-acetyl-alpha-D-galactosamine = a 3-O-[N-acetyl-alpha-D-galactosaminyl]-L-threonyl-[protein] + UDP + H(+). The protein operates within protein modification; protein glycosylation. Functionally, catalyzes the initial reaction in O-linked oligosaccharide biosynthesis, the transfer of an N-acetyl-D-galactosamine residue to a serine or threonine residue on the protein receptor. May participate in synthesis of oncofetal fibronectin. Has activity toward Muc1a, Muc2, EA2 and fibronectin peptides. This chain is Polypeptide N-acetylgalactosaminyltransferase 6 (Galnt6), found in Mus musculus (Mouse).